The sequence spans 558 residues: Formate--tetrahydrofolate ligase (558 aa).

66–73 (TPAGEGKT) serves as a coordination point for ATP.

It belongs to the formate--tetrahydrofolate ligase family.

The enzyme catalyses (6S)-5,6,7,8-tetrahydrofolate + formate + ATP = (6R)-10-formyltetrahydrofolate + ADP + phosphate. Its pathway is one-carbon metabolism; tetrahydrofolate interconversion. This chain is Formate--tetrahydrofolate ligase, found in Neisseria meningitidis serogroup A / serotype 4A (strain DSM 15465 / Z2491).